Consider the following 205-residue polypeptide: Regulator of G-protein signaling 4 (205 aa).

Residues Cys-2, Cys-12, and Cys-95 are each lipidated (S-palmitoyl cysteine). An RGS domain is found at 62-178; it reads SLENLISHEC…LKSRFYLDLV (117 aa).

Palmitoylated on Cys-2 and/or Cys-12. Post-translationally, phosphorylated by cyclic GMP-dependent protein kinase.

Functionally, inhibits signal transduction by increasing the GTPase activity of G protein alpha subunits thereby driving them into their inactive GDP-bound form. Activity on G(z)-alpha is inhibited by phosphorylation of the G-protein. Activity on G(z)-alpha and G(i)-alpha-1 is inhibited by palmitoylation of the G-protein. The chain is Regulator of G-protein signaling 4 (RGS4) from Pongo abelii (Sumatran orangutan).